We begin with the raw amino-acid sequence, 392 residues long: Anhydro-N-acetylmuramic acid kinase (392 aa).

Residue 22–29 coordinates ATP; the sequence is GTSMDGVD.

The protein belongs to the anhydro-N-acetylmuramic acid kinase family.

The enzyme catalyses 1,6-anhydro-N-acetyl-beta-muramate + ATP + H2O = N-acetyl-D-muramate 6-phosphate + ADP + H(+). Its pathway is amino-sugar metabolism; 1,6-anhydro-N-acetylmuramate degradation. It participates in cell wall biogenesis; peptidoglycan recycling. Catalyzes the specific phosphorylation of 1,6-anhydro-N-acetylmuramic acid (anhMurNAc) with the simultaneous cleavage of the 1,6-anhydro ring, generating MurNAc-6-P. Is required for the utilization of anhMurNAc either imported from the medium or derived from its own cell wall murein, and thus plays a role in cell wall recycling. The protein is Anhydro-N-acetylmuramic acid kinase of Burkholderia pseudomallei (strain 1106a).